A 340-amino-acid chain; its full sequence is Beta-ketoacyl-[acyl-carrier-protein] synthase III (340 aa).

Active-site residues include Cys122 and His260. Residues Gln261–Arg265 form an ACP-binding region. Residue Asn291 is part of the active site.

Belongs to the thiolase-like superfamily. FabH family. In terms of assembly, homodimer.

It is found in the cytoplasm. The catalysed reaction is malonyl-[ACP] + acetyl-CoA + H(+) = 3-oxobutanoyl-[ACP] + CO2 + CoA. Its pathway is lipid metabolism; fatty acid biosynthesis. In terms of biological role, catalyzes the condensation reaction of fatty acid synthesis by the addition to an acyl acceptor of two carbons from malonyl-ACP. Catalyzes the first condensation reaction which initiates fatty acid synthesis and may therefore play a role in governing the total rate of fatty acid production. Possesses both acetoacetyl-ACP synthase and acetyl transacylase activities. Its substrate specificity determines the biosynthesis of branched-chain and/or straight-chain of fatty acids. This is Beta-ketoacyl-[acyl-carrier-protein] synthase III from Mycobacteroides abscessus (strain ATCC 19977 / DSM 44196 / CCUG 20993 / CIP 104536 / JCM 13569 / NCTC 13031 / TMC 1543 / L948) (Mycobacterium abscessus).